The chain runs to 629 residues: uncharacterized protein (629 aa).

The segment covering 1–11 (MSDDQQNGKQN) has biased composition (polar residues). Disordered stretches follow at residues 1-24 (MSDDQQNGKQNTTTTTSTPTEQDD), 62-87 (SNNNNNNNNDSVNNNSNNNINNSNYN), 197-464 (SEES…SSLI), and 493-560 (PTPT…STPD). Over residues 247–264 (PSSSSSSSSLINSPTTSK) the composition is skewed to low complexity. The span at 274–288 (PTINPKSLFGLSSTI) shows a compositional bias: polar residues. Basic and acidic residues predominate over residues 294–430 (VKTEKEKEKE…DETLNKETPH (137 aa)). Composition is skewed to low complexity over residues 434–464 (PHITTKKSPNLTPPISSTASPPSVTTYSSLI) and 493–554 (PTPT…NNNN).

This is an uncharacterized protein from Dictyostelium discoideum (Social amoeba).